A 146-amino-acid polypeptide reads, in one-letter code: Anti-sigma F factor (146 aa).

It belongs to the anti-sigma-factor family.

The enzyme catalyses L-seryl-[protein] + ATP = O-phospho-L-seryl-[protein] + ADP + H(+). It carries out the reaction L-threonyl-[protein] + ATP = O-phospho-L-threonyl-[protein] + ADP + H(+). Functionally, binds to sigma F and blocks its ability to form an RNA polymerase holoenzyme (E-sigma F). Phosphorylates SpoIIAA on a serine residue. This phosphorylation may enable SpoIIAA to act as an anti-anti-sigma factor that counteracts SpoIIAB and thus releases sigma F from inhibition. This Bacillus velezensis (strain DSM 23117 / BGSC 10A6 / LMG 26770 / FZB42) (Bacillus amyloliquefaciens subsp. plantarum) protein is Anti-sigma F factor.